A 370-amino-acid polypeptide reads, in one-letter code: Queuine tRNA-ribosyltransferase (370 aa).

D89 serves as the catalytic Proton acceptor. Substrate is bound by residues 89–93 (DSGGF), D143, and G214. The RNA binding stretch occupies residues 245 to 251 (GVGKPED). D264 functions as the Nucleophile in the catalytic mechanism. An RNA binding; important for wobble base 34 recognition region spans residues 269–273 (TRNAR). 4 residues coordinate Zn(2+): C302, C304, C307, and H333.

The protein belongs to the queuine tRNA-ribosyltransferase family. Homodimer. Within each dimer, one monomer is responsible for RNA recognition and catalysis, while the other monomer binds to the replacement base PreQ1. It depends on Zn(2+) as a cofactor.

It carries out the reaction 7-aminomethyl-7-carbaguanine + guanosine(34) in tRNA = 7-aminomethyl-7-carbaguanosine(34) in tRNA + guanine. The protein operates within tRNA modification; tRNA-queuosine biosynthesis. Catalyzes the base-exchange of a guanine (G) residue with the queuine precursor 7-aminomethyl-7-deazaguanine (PreQ1) at position 34 (anticodon wobble position) in tRNAs with GU(N) anticodons (tRNA-Asp, -Asn, -His and -Tyr). Catalysis occurs through a double-displacement mechanism. The nucleophile active site attacks the C1' of nucleotide 34 to detach the guanine base from the RNA, forming a covalent enzyme-RNA intermediate. The proton acceptor active site deprotonates the incoming PreQ1, allowing a nucleophilic attack on the C1' of the ribose to form the product. After dissociation, two additional enzymatic reactions on the tRNA convert PreQ1 to queuine (Q), resulting in the hypermodified nucleoside queuosine (7-(((4,5-cis-dihydroxy-2-cyclopenten-1-yl)amino)methyl)-7-deazaguanosine). The polypeptide is Queuine tRNA-ribosyltransferase (Buchnera aphidicola subsp. Acyrthosiphon pisum (strain APS) (Acyrthosiphon pisum symbiotic bacterium)).